Here is a 222-residue protein sequence, read N- to C-terminus: MALHIHEACILLLVIPGLVTSAAISHEDYPADEGDQASSNDNLIFDDYRGKGCVDDSGFVYKLGERFFPGHSNCPCVCALDGPVCDQPECPKIHPKCTKVEHNGCCPECKEVKNFCEYHGKNYKILEEFKPSPCEWCRCEPSNEVHCVVADCAVPECVNPIYEPEQCCPVCKNGPNCFAGTTIIPAGIEVKVDDCNICHCHNGDWWKPAQCSKRECQGKQTV.

Positions 1-21 are cleaved as a signal peptide; it reads MALHIHEACILLLVIPGLVTS. 2 VWFC domains span residues 51-110 and 114-172; these read KGCV…PECK and NFCE…PVCK.

Peripherally associated with AMPAR complex. AMPAR complex consists of an inner core made of 4 pore-forming GluA/GRIA proteins (GRIA1, GRIA2, GRIA3 and GRIA4) and 4 major auxiliary subunits arranged in a twofold symmetry. One of the two pairs of distinct binding sites is occupied either by CNIH2, CNIH3 or CACNG2, CACNG3. The other harbors CACNG2, CACNG3, CACNG4, CACNG8 or GSG1L. This inner core of AMPAR complex is complemented by outer core constituents binding directly to the GluA/GRIA proteins at sites distinct from the interaction sites of the inner core constituents. Outer core constituents include at least PRRT1, PRRT2, CKAMP44/SHISA9, FRRS1L and NRN1. The proteins of the inner and outer core serve as a platform for other, more peripherally associated AMPAR constituents, including VWC2L. Alone or in combination, these auxiliary subunits control the gating and pharmacology of the AMPAR complex and profoundly impact their biogenesis and protein processing. In terms of tissue distribution, predominantly expressed in the brain (at protein level). Also detected in bones, including femur and calvaria, heart, lung and kidney. Isoform 5 is predominant in lung and heart, compared to isoforms 1 and 3. Isoform 4 is expressed in femur and calvaria at higher levels than isoforms 1 and 5. Isoforms 1 and 4 are expressed at higher levels than isoform 5 in kidney and brain.

It is found in the secreted. The protein localises to the synapse. Functionally, may play a role in neurogenesis. May promote matrix mineralization, but has been shown to weakly, but significantly inhibit BMP2 and BMP6 activity in a preosteoblastic cell line. This Mus musculus (Mouse) protein is von Willebrand factor C domain-containing protein 2-like (Vwc2l).